The chain runs to 345 residues: Heat stress transcription factor A-4c (345 aa).

The DNA-binding element occupies L11–P105. The interval P119–L185 is hydrophobic repeat HR-A/B. Residues R199–R203 carry the Nuclear localization signal motif. The AHA1 signature appears at L226 to E235. A disordered region spans residues S240–T329. Positions P274–P283 are enriched in low complexity. The short motif at D289 to E298 is the AHA2 element. 2 stretches are compositionally biased toward polar residues: residues L296–V308 and N317–T329.

The protein belongs to the HSF family. Class A subfamily. In terms of assembly, homotrimer. In terms of processing, exhibits temperature-dependent phosphorylation. As to expression, expressed in roots, seedlings and at lower levels in leaves.

Its subcellular location is the nucleus. Its function is as follows. Transcriptional activator that specifically binds DNA sequence 5'-AGAAnnTTCT-3' known as heat shock promoter elements (HSE). May be involved in general response to auxin. In Arabidopsis thaliana (Mouse-ear cress), this protein is Heat stress transcription factor A-4c (HSFA4C).